A 179-amino-acid chain; its full sequence is Auxin-induced protein IAA6 (179 aa).

The EAR-like (transcriptional repression) motif lies at 13-17 (LRLGL). The disordered stretch occupies residues 31 to 52 (FSEIDGGVEENGGSGDRKSVDK). Residues 75-163 (KMYMKVSMDG…KRLRIMKRSD (89 aa)) form the PB1 domain.

This sequence belongs to the Aux/IAA family. In terms of assembly, homodimers and heterodimers.

It is found in the nucleus. In terms of biological role, aux/IAA proteins are short-lived transcriptional factors that function as repressors of early auxin response genes at low auxin concentrations. Repression is thought to result from the interaction with auxin response factors (ARFs), proteins that bind to the auxin-responsive promoter element (AuxRE). Formation of heterodimers with ARF proteins may alter their ability to modulate early auxin response genes expression. The protein is Auxin-induced protein IAA6 (IAA6) of Pisum sativum (Garden pea).